The sequence spans 172 residues: Ribosome maturation factor RimM (172 aa).

Residues 96-168 (DGEFYYHEII…RVDVEIPEGL (73 aa)) enclose the PRC barrel domain.

It belongs to the RimM family. In terms of assembly, binds ribosomal protein uS19.

It is found in the cytoplasm. Functionally, an accessory protein needed during the final step in the assembly of 30S ribosomal subunit, possibly for assembly of the head region. Essential for efficient processing of 16S rRNA. May be needed both before and after RbfA during the maturation of 16S rRNA. It has affinity for free ribosomal 30S subunits but not for 70S ribosomes. The sequence is that of Ribosome maturation factor RimM from Streptococcus sanguinis (strain SK36).